The following is a 151-amino-acid chain: 3-hydroxyacyl-[acyl-carrier-protein] dehydratase FabZ (151 aa).

Residue histidine 54 is part of the active site.

This sequence belongs to the thioester dehydratase family. FabZ subfamily.

The protein resides in the cytoplasm. It carries out the reaction a (3R)-hydroxyacyl-[ACP] = a (2E)-enoyl-[ACP] + H2O. In terms of biological role, involved in unsaturated fatty acids biosynthesis. Catalyzes the dehydration of short chain beta-hydroxyacyl-ACPs and long chain saturated and unsaturated beta-hydroxyacyl-ACPs. The polypeptide is 3-hydroxyacyl-[acyl-carrier-protein] dehydratase FabZ (Klebsiella pneumoniae (strain 342)).